We begin with the raw amino-acid sequence, 499 residues long: Flotillin-like protein 2 (499 aa).

The S-palmitoyl cysteine moiety is linked to residue cysteine 37. Residues leucine 243–glutamate 319 are a coiled coil.

It belongs to the band 7/mec-2 family. Flotillin subfamily. In terms of processing, may be palmitoylated.

The protein resides in the cell membrane. It localises to the membrane. The protein localises to the caveola. May act as a scaffolding protein within caveolar membranes, functionally participating in formation of caveolae or caveolae-like vesicles. The protein is Flotillin-like protein 2 (FLOT2) of Oryza sativa subsp. japonica (Rice).